The chain runs to 282 residues: Bifunctional protein FolD (282 aa).

163–165 (GRS) provides a ligand contact to NADP(+).

This sequence belongs to the tetrahydrofolate dehydrogenase/cyclohydrolase family. In terms of assembly, homodimer.

It catalyses the reaction (6R)-5,10-methylene-5,6,7,8-tetrahydrofolate + NADP(+) = (6R)-5,10-methenyltetrahydrofolate + NADPH. It carries out the reaction (6R)-5,10-methenyltetrahydrofolate + H2O = (6R)-10-formyltetrahydrofolate + H(+). It participates in one-carbon metabolism; tetrahydrofolate interconversion. Functionally, catalyzes the oxidation of 5,10-methylenetetrahydrofolate to 5,10-methenyltetrahydrofolate and then the hydrolysis of 5,10-methenyltetrahydrofolate to 10-formyltetrahydrofolate. The protein is Bifunctional protein FolD of Leuconostoc citreum (strain KM20).